The chain runs to 319 residues: 7-methylguanosine phosphate-specific 5'-nucleotidase (319 aa).

D55 serves as the catalytic Nucleophile. Mg(2+) contacts are provided by D55 and D57. D57 (proton donor) is an active-site residue. E103 contacts CMP. E103 and S124 together coordinate N(7)-methyl-GMP. 171-172 (SA) is a substrate binding site. Residue D245 coordinates Mg(2+).

This sequence belongs to the pyrimidine 5'-nucleotidase family. As to quaternary structure, monomer. Mg(2+) serves as cofactor.

The catalysed reaction is N(7)-methyl-GMP + H2O = N(7)-methylguanosine + phosphate. It catalyses the reaction CMP + H2O = cytidine + phosphate. It carries out the reaction a ribonucleoside 5'-phosphate + H2O = a ribonucleoside + phosphate. With respect to regulation, inhibited by high levels of AMP. Specifically hydrolyzes 7-methylguanosine monophosphate (m(7)GMP) to 7-methylguanosine and inorganic phosphate. Also able to mediate hydrolysis of diphosphate (m(7)GDP) to 7-methylguanosine and 2 inorganic phosphate with lower activity. The specific activity for m(7)GMP may protect cells against undesired salvage of m(7)GMP and its incorporation into nucleic acids. Also has weak activity for CMP. UMP and purine nucleotides are poor substrates. In Drosophila melanogaster (Fruit fly), this protein is 7-methylguanosine phosphate-specific 5'-nucleotidase.